A 234-amino-acid polypeptide reads, in one-letter code: Peroxiredoxin (234 aa).

The Thioredoxin domain maps to 6–161 (PLIGEKLPEM…ILRLLKALQV (156 aa)). The active-site Cysteine sulfenic acid (-SOH) intermediate is the Cys-48. Residue Arg-124 coordinates substrate. A disulfide bond links Cys-203 and Cys-209.

This sequence belongs to the peroxiredoxin family. Prx6 subfamily. As to quaternary structure, homodecamer. Pentamer of dimers that assemble into a ring structure.

It is found in the cytoplasm. The enzyme catalyses a hydroperoxide + [thioredoxin]-dithiol = an alcohol + [thioredoxin]-disulfide + H2O. Functionally, thiol-specific peroxidase that catalyzes the reduction of hydrogen peroxide and organic hydroperoxides to water and alcohols, respectively. Plays a role in cell protection against oxidative stress by detoxifying peroxides. In Ignicoccus hospitalis (strain KIN4/I / DSM 18386 / JCM 14125), this protein is Peroxiredoxin.